The chain runs to 184 residues: NADH-quinone oxidoreductase subunit B (184 aa).

[4Fe-4S] cluster-binding residues include Cys37, Cys38, Cys103, and Cys132. The segment at 164-184 is disordered; sequence HEREEAAKHALPTHSMKGLLR.

It belongs to the complex I 20 kDa subunit family. In terms of assembly, NDH-1 is composed of 14 different subunits. Subunits NuoB, C, D, E, F, and G constitute the peripheral sector of the complex. Requires [4Fe-4S] cluster as cofactor.

The protein localises to the cell membrane. It carries out the reaction a quinone + NADH + 5 H(+)(in) = a quinol + NAD(+) + 4 H(+)(out). Functionally, NDH-1 shuttles electrons from NADH, via FMN and iron-sulfur (Fe-S) centers, to quinones in the respiratory chain. The immediate electron acceptor for the enzyme in this species is believed to be a menaquinone. Couples the redox reaction to proton translocation (for every two electrons transferred, four hydrogen ions are translocated across the cytoplasmic membrane), and thus conserves the redox energy in a proton gradient. In Acidothermus cellulolyticus (strain ATCC 43068 / DSM 8971 / 11B), this protein is NADH-quinone oxidoreductase subunit B.